The following is a 529-amino-acid chain: V-set and immunoglobulin domain-containing protein 10 (529 aa).

A signal peptide spans 1–18; that stretch reads MMITSAVVLYLLLLSHQT. Ig-like C2-type domains are found at residues 19 to 110 and 129 to 217; these read VSEE…QTLS and PATF…QELL. At 21–411 the chain is on the extracellular side; that stretch reads EEQVQQFVIG…LNVKTSAGNG (391 aa). N-linked (GlcNAc...) asparagine glycans are attached at residues N34, N35, N46, N135, N147, N159, N211, N269, N280, N284, N330, N357, and N376. A disulfide bond links C40 and C96. An intrachain disulfide couples C150 to C199. Positions 317–403 constitute an Ig-like C2-type 3 domain; that stretch reads PTGQPLATAL…GARELEVYLN (87 aa). Residues C335 and C387 are joined by a disulfide bond. A helical membrane pass occupies residues 412–432; that stretch reads GAIVGIFVSVLVMMIGIVVGV. The Cytoplasmic segment spans residues 433–529; sequence TVYTKRDRIC…PQRAELQPAV (97 aa).

It is found in the membrane. The sequence is that of V-set and immunoglobulin domain-containing protein 10 (vsig10) from Danio rerio (Zebrafish).